The sequence spans 120 residues: MDDSKVVGGKVKKPGKRGRKPAKIDLKAKLERSRQSARECRARKKLRYQYLEELVSSRERAICALREELEMYKQWCMAMDQGKIPSEIKALLTGEEQNKSQQNSSRHTKAGKTDANSNSW.

Residues 1 to 24 are disordered; the sequence is MDDSKVVGGKVKKPGKRGRKPAKI. A compositionally biased stretch (basic residues) spans 10-21; that stretch reads KVKKPGKRGRKP. The region spanning 23–86 is the bZIP domain; sequence KIDLKAKLER…MAMDQGKIPS (64 aa). A basic motif region spans residues 29–60; that stretch reads KLERSRQSARECRARKKLRYQYLEELVSSRER. The segment at 62-69 is leucine-zipper; the sequence is ICALREEL. The disordered stretch occupies residues 93–120; sequence TGEEQNKSQQNSSRHTKAGKTDANSNSW.

It belongs to the bZIP family. ATF subfamily. In terms of assembly, interacts with CREB1; regulates CREB1 phosphorylation, stability and transcriptional activity. In terms of processing, phosphorylated by AMPK.

It is found in the nucleus. Its function is as follows. Probable regulator of CREB1 transcriptional activity which is involved in adipose cells differentiation. May also play a regulatory role in the cell cycle. Identification in a chromosomal region frequently deleted in various cancers suggests that it might act as a tumor suppressor. This is cAMP-responsive element-binding protein-like 2 (CREBL2) from Homo sapiens (Human).